Consider the following 83-residue polypeptide: UPF0297 protein CKR_1221 (83 aa).

This sequence belongs to the UPF0297 family.

The protein is UPF0297 protein CKR_1221 of Clostridium kluyveri (strain NBRC 12016).